Reading from the N-terminus, the 225-residue chain is MAEGETESPRPKKRGPYISSVTSQSVNVVIRGVVLFFIGVFLALVLNLLQIQRNVTLFPPDVITSIFSSAWWVPPCCGTASAVIGLLYPCIDRHLGEPHKFKREWSSVMRCVAVFVGINHASAKVDFDNNFQFSLTLAALSVGLWWTFDRSRSGFGLGVGIAFLATVVTQLLVYNGVYQYTSPDFLYVRSWLPCIFFAGGITMGNIGRQLAMYECKVIAEKSHQE.

Residues 1–28 (MAEGETESPRPKKRGPYISSVTSQSVNV) lie on the Cytoplasmic side of the membrane. A helical membrane pass occupies residues 29–51 (VIRGVVLFFIGVFLALVLNLLQI). At 52-70 (QRNVTLFPPDVITSIFSSA) the chain is on the lumenal side. The helical transmembrane segment at 71–88 (WWVPPCCGTASAVIGLLY) threads the bilayer. Topologically, residues 89–103 (PCIDRHLGEPHKFKR) are cytoplasmic. The chain crosses the membrane as a helical span at residues 104-126 (EWSSVMRCVAVFVGINHASAKVD). The Lumenal segment spans residues 127–129 (FDN). A helical membrane pass occupies residues 130–148 (NFQFSLTLAALSVGLWWTF). The Cytoplasmic segment spans residues 149-153 (DRSRS). The residue at position 151 (Ser151) is a Phosphoserine. A helical transmembrane segment spans residues 154–175 (GFGLGVGIAFLATVVTQLLVYN). Residues 176 to 189 (GVYQYTSPDFLYVR) are Lumenal-facing. The helical transmembrane segment at 190–207 (SWLPCIFFAGGITMGNIG) threads the bilayer. Over 208 to 225 (RQLAMYECKVIAEKSHQE) the chain is Cytoplasmic. The residue at position 215 (Cys215) is a Cysteine sulfenic acid (-SOH); alternate. Cys215 is covalently cross-linked (Glycyl cysteine thioester (Cys-Gly) (interchain with G-Cter in ubiquitin); alternate). Positions 219 to 225 (AEKSHQE) match the KxHxx motif.

It belongs to the INSIG family. Interacts with SCAP; interaction is direct and only takes place in the presence of sterols; it prevents interaction between SCAP and the coat protein complex II (COPII). Associates with the SCAP-SREBP complex (composed of SCAP and SREBF1/SREBP1 or SREBF2/SREBP2); association is mediated via its interaction with SCAP and only takes place in the presence of sterols. Interacts with RNF139. Interacts with RNF145. Phosphorylation at Ser-151 by PCK1 reduces binding to oxysterol, disrupting the interaction between INSIG2 and SCAP, thereby promoting nuclear translocation of SREBP proteins (SREBF1/SREBP1 or SREBF2/SREBP2) and subsequent transcription of downstream lipogenesis-related genes. Post-translationally, polyubiquitinated by AMFR/gp78 at Cys-215 in some tissues such as adipose tissues, undifferentiated myoblasts and liver, leading to its degradation. In differentiated myotubes, Cys-215 oxidation prevents ubiquitination at the same site, resulting in protein stabilization. In terms of processing, oxidized at Cys-215 in differentiated myotubes, preventing ubiquitination at the same site, and resulting in protein stabilization.

It localises to the endoplasmic reticulum membrane. Functionally, oxysterol-binding protein that mediates feedback control of cholesterol synthesis by controlling both endoplasmic reticulum to Golgi transport of SCAP and degradation of HMGCR. Acts as a negative regulator of cholesterol biosynthesis by mediating the retention of the SCAP-SREBP complex in the endoplasmic reticulum, thereby blocking the processing of sterol regulatory element-binding proteins (SREBPs) SREBF1/SREBP1 and SREBF2/SREBP2. Binds oxysterol, including 22-hydroxycholesterol, 24-hydroxycholesterol, 25-hydroxycholesterol and 27-hydroxycholesterol, regulating interaction with SCAP and retention of the SCAP-SREBP complex in the endoplasmic reticulum. In presence of oxysterol, interacts with SCAP, retaining the SCAP-SREBP complex in the endoplasmic reticulum, thereby preventing SCAP from escorting SREBF1/SREBP1 and SREBF2/SREBP2 to the Golgi. Sterol deprivation or phosphorylation by PCK1 reduce oxysterol-binding, disrupting the interaction between INSIG2 and SCAP, thereby promoting Golgi transport of the SCAP-SREBP complex, followed by processing and nuclear translocation of SREBF1/SREBP1 and SREBF2/SREBP2. Also regulates cholesterol synthesis by regulating degradation of HMGCR: initiates the sterol-mediated ubiquitin-mediated endoplasmic reticulum-associated degradation (ERAD) of HMGCR via recruitment of the reductase to the ubiquitin ligase RNF139. This is Insulin-induced gene 2 protein from Rattus norvegicus (Rat).